The chain runs to 174 residues: Secreted protein A (174 aa).

The N-terminal stretch at 1–19 (MRLLITLFAIFALFNCSLA) is a signal peptide. N-linked (GlcNAc...) asparagine glycosylation occurs at N156.

Belongs to the Sct family. Post-translationally, probably contains disulfide bonds.

Its subcellular location is the secreted. It is found in the extracellular vesicle. This chain is Secreted protein A (p17), found in Dictyostelium discoideum (Social amoeba).